A 282-amino-acid chain; its full sequence is Probable endonuclease 4 (282 aa).

9 residues coordinate Zn(2+): H69, H109, E145, D179, H182, H216, D229, H231, and E261.

This sequence belongs to the AP endonuclease 2 family. It depends on Zn(2+) as a cofactor.

The enzyme catalyses Endonucleolytic cleavage to 5'-phosphooligonucleotide end-products.. In terms of biological role, endonuclease IV plays a role in DNA repair. It cleaves phosphodiester bonds at apurinic or apyrimidinic (AP) sites, generating a 3'-hydroxyl group and a 5'-terminal sugar phosphate. The chain is Probable endonuclease 4 from Chlorobium chlorochromatii (strain CaD3).